Here is a 346-residue protein sequence, read N- to C-terminus: UPF0425 pyridoxal phosphate-dependent protein MK0620 (346 aa).

K206 carries the N6-(pyridoxal phosphate)lysine modification.

It depends on pyridoxal 5'-phosphate as a cofactor.

The protein is UPF0425 pyridoxal phosphate-dependent protein MK0620 of Methanopyrus kandleri (strain AV19 / DSM 6324 / JCM 9639 / NBRC 100938).